A 377-amino-acid polypeptide reads, in one-letter code: Nitric oxide reductase FlRd-NAD(+) reductase (377 aa).

This sequence belongs to the FAD-dependent oxidoreductase family. FAD is required as a cofactor.

The protein resides in the cytoplasm. The enzyme catalyses 2 reduced [nitric oxide reductase rubredoxin domain] + NAD(+) + H(+) = 2 oxidized [nitric oxide reductase rubredoxin domain] + NADH. The protein operates within nitrogen metabolism; nitric oxide reduction. Its function is as follows. One of at least two accessory proteins for anaerobic nitric oxide (NO) reductase. Reduces the rubredoxin moiety of NO reductase. This Escherichia coli O9:H4 (strain HS) protein is Nitric oxide reductase FlRd-NAD(+) reductase.